The primary structure comprises 105 residues: Large ribosomal subunit protein uL24 (105 aa).

The protein belongs to the universal ribosomal protein uL24 family. In terms of assembly, part of the 50S ribosomal subunit.

Its function is as follows. One of two assembly initiator proteins, it binds directly to the 5'-end of the 23S rRNA, where it nucleates assembly of the 50S subunit. Functionally, one of the proteins that surrounds the polypeptide exit tunnel on the outside of the subunit. This Xanthomonas axonopodis pv. citri (strain 306) protein is Large ribosomal subunit protein uL24.